A 60-amino-acid polypeptide reads, in one-letter code: Cytotoxin 6 (60 aa).

Intrachain disulfides connect Cys-3–Cys-21, Cys-14–Cys-38, Cys-42–Cys-53, and Cys-54–Cys-59.

The protein belongs to the three-finger toxin family. Short-chain subfamily. Type IA cytotoxin sub-subfamily. In terms of assembly, monomer in solution; Homodimer and oligomer in the presence of negatively charged lipids forming a pore with a size ranging between 20 and 30 Angstroms. In terms of tissue distribution, expressed by the venom gland.

It localises to the secreted. The protein localises to the target cell membrane. Its function is as follows. Shows cytolytic activity on many different cells by forming pore in lipid membranes. In vivo, increases heart rate or kills the animal by cardiac arrest. In addition, it binds to heparin with high affinity, interacts with Kv channel-interacting protein 1 (KCNIP1) in a calcium-independent manner, and binds to integrin alpha-V/beta-3 (ITGAV/ITGB3) with moderate affinity. The polypeptide is Cytotoxin 6 (Naja annulifera (Banded Egyptian cobra)).